We begin with the raw amino-acid sequence, 257 residues long: Type III pantothenate kinase (257 aa).

Position 24-31 (24-31 (MIGNSRLH)) interacts with ATP. Residues Y96 and 100 to 103 (GIDR) contribute to the substrate site. The active-site Proton acceptor is D102. D122 provides a ligand contact to K(+). T125 contributes to the ATP binding site. T180 provides a ligand contact to substrate.

This sequence belongs to the type III pantothenate kinase family. As to quaternary structure, homodimer. The cofactor is NH4(+). Requires K(+) as cofactor.

It localises to the cytoplasm. The enzyme catalyses (R)-pantothenate + ATP = (R)-4'-phosphopantothenate + ADP + H(+). It functions in the pathway cofactor biosynthesis; coenzyme A biosynthesis; CoA from (R)-pantothenate: step 1/5. Its function is as follows. Catalyzes the phosphorylation of pantothenate (Pan), the first step in CoA biosynthesis. This chain is Type III pantothenate kinase, found in Synechocystis sp. (strain ATCC 27184 / PCC 6803 / Kazusa).